A 374-amino-acid polypeptide reads, in one-letter code: MSTEKINLLDFDRKGMRELFAQELGEKAFRADQVMKWIYHFGVDDFDNMTNINKQLREKLKQKCEIVAPVVSEAQHSSDGTIKWAMRVGDQDVETVYIPEEDRATLCVSSQVGCALECKFCSTAQQGFNRNLKVSEIIGQVWRAAREVGLEKETGRRPITNVVMMGMGEPLLNMKNLIPALEIMLDDLGFGLSKRRVTVSTSGVVSGLDQMTGKIDVALAISLHAPNDKLRSEIMPINDRWDIQDFLASVRRYIASSNANRGKVTVEYVLLDHVNDGTEHAHELAQLMKDTPCKINLIPFNPYPGSPYKKPSNSRIDRFQKTLMQYEHTVTIRKTRGDDIDAACGQLVGDVIDRTKRTAMLKAAKGETIEVKAL.

E94 functions as the Proton acceptor in the catalytic mechanism. The region spanning 100 to 339 is the Radical SAM core domain; the sequence is EEDRATLCVS…VTIRKTRGDD (240 aa). A disulfide bridge links C107 with C344. Positions 114, 118, and 121 each coordinate [4Fe-4S] cluster. Residues 168-169, S200, 222-224, and N301 each bind S-adenosyl-L-methionine; these read GE and SLH. C344 serves as the catalytic S-methylcysteine intermediate.

The protein belongs to the radical SAM superfamily. RlmN family. [4Fe-4S] cluster is required as a cofactor.

The protein localises to the cytoplasm. The enzyme catalyses adenosine(2503) in 23S rRNA + 2 reduced [2Fe-2S]-[ferredoxin] + 2 S-adenosyl-L-methionine = 2-methyladenosine(2503) in 23S rRNA + 5'-deoxyadenosine + L-methionine + 2 oxidized [2Fe-2S]-[ferredoxin] + S-adenosyl-L-homocysteine. It catalyses the reaction adenosine(37) in tRNA + 2 reduced [2Fe-2S]-[ferredoxin] + 2 S-adenosyl-L-methionine = 2-methyladenosine(37) in tRNA + 5'-deoxyadenosine + L-methionine + 2 oxidized [2Fe-2S]-[ferredoxin] + S-adenosyl-L-homocysteine. Its function is as follows. Specifically methylates position 2 of adenine 2503 in 23S rRNA and position 2 of adenine 37 in tRNAs. m2A2503 modification seems to play a crucial role in the proofreading step occurring at the peptidyl transferase center and thus would serve to optimize ribosomal fidelity. The polypeptide is Dual-specificity RNA methyltransferase RlmN (Vibrio vulnificus (strain CMCP6)).